A 295-amino-acid chain; its full sequence is Protein FAM110A (295 aa).

Disordered regions lie at residues P117–I148 and P160–L191. 2 stretches are compositionally biased toward pro residues: residues L138–S147 and P160–G171.

Belongs to the FAM110 family. May interact with CSPP1.

It is found in the cytoplasm. The protein resides in the cytoskeleton. Its subcellular location is the microtubule organizing center. It localises to the centrosome. The protein localises to the spindle pole. The polypeptide is Protein FAM110A (FAM110A) (Bos taurus (Bovine)).